The chain runs to 663 residues: UvrABC system protein B (663 aa).

Positions 31–418 (DNIEGGEKAQ…TDTVVEQIIR (388 aa)) constitute a Helicase ATP-binding domain. 44 to 51 (GATGTGKT) provides a ligand contact to ATP. A Beta-hairpin motif is present at residues 97-120 (YYDYYQPEAYVPSSDTYIEKDSSV). A Helicase C-terminal domain is found at 435–601 (QMDDLLGEIN…TIKKEIRDLI (167 aa)). In terms of domain architecture, UVR spans 627-662 (QAEIKALQKQMQEAAELLDFELAAQIRDVILKLKAI).

This sequence belongs to the UvrB family. As to quaternary structure, forms a heterotetramer with UvrA during the search for lesions. Interacts with UvrC in an incision complex.

The protein resides in the cytoplasm. Functionally, the UvrABC repair system catalyzes the recognition and processing of DNA lesions. A damage recognition complex composed of 2 UvrA and 2 UvrB subunits scans DNA for abnormalities. Upon binding of the UvrA(2)B(2) complex to a putative damaged site, the DNA wraps around one UvrB monomer. DNA wrap is dependent on ATP binding by UvrB and probably causes local melting of the DNA helix, facilitating insertion of UvrB beta-hairpin between the DNA strands. Then UvrB probes one DNA strand for the presence of a lesion. If a lesion is found the UvrA subunits dissociate and the UvrB-DNA preincision complex is formed. This complex is subsequently bound by UvrC and the second UvrB is released. If no lesion is found, the DNA wraps around the other UvrB subunit that will check the other stand for damage. The polypeptide is UvrABC system protein B (Streptococcus agalactiae serotype Ia (strain ATCC 27591 / A909 / CDC SS700)).